We begin with the raw amino-acid sequence, 312 residues long: Ubiquinone biosynthesis protein COQ9, mitochondrial (312 aa).

The transit peptide at 1-45 directs the protein to the mitochondrion; that stretch reads MAATAAVSGVLRRLGWRLLQLRCLPVARCQSPLMPRAFHTAVGFR. The SIFI-degron motif lies at 17 to 32; it reads RLLQLRCLPVARCQSP. The tract at residues 43–92 is disordered; sequence GFRSSEEQRQQPPHSSQQHSETQGPEFSRPPPRYTDQSGEEEEDYESEEQ. The segment covering 52 to 63 has biased composition (low complexity); sequence QQPPHSSQQHSE. S80 carries the post-translational modification Phosphoserine. Positions 80-91 are enriched in acidic residues; that stretch reads SGEEEEDYESEE. K169 is modified (N6-acetyllysine). An a 1,2-diacylglycero-3-phosphoethanolamine-binding site is contributed by R238.

It belongs to the COQ9 family. In terms of assembly, homodimer. Heterodimer; two heterodimers of COQ7:COQ9 come together on the same side of the lipid pseudo-bilayer and form a curved tetramer with a hydrophobic surface suitable for membrane interaction. These two tetramers assemble into a soluble octamer with a pseudo-bilayer of lipids captured within. Interacts with COQ7; this interaction allows ubiquinone (CoQ) isoprene intermediates presentation to COQ7 and facilitates the COQ7-mediated hydroxylase step. In response to mitochondrial stress, the precursor protein is ubiquitinated by the SIFI complex in the cytoplasm before mitochondrial import, leading to its degradation. Within the SIFI complex, UBR4 initiates ubiquitin chain that are further elongated or branched by KCMF1.

It is found in the mitochondrion. It functions in the pathway cofactor biosynthesis; ubiquinone biosynthesis. Membrane-associated protein that warps the membrane surface to access and bind aromatic isoprenes with high specificity, including ubiquinone (CoQ) isoprene intermediates and presents them directly to COQ7, therefore facilitating the COQ7-mediated hydroxylase step. Participates in the biosynthesis of coenzyme Q, also named ubiquinone, an essential lipid-soluble electron transporter for aerobic cellular respiration. In Rattus norvegicus (Rat), this protein is Ubiquinone biosynthesis protein COQ9, mitochondrial.